A 1137-amino-acid chain; its full sequence is MSDIVEKTLTALPGLFLQNQPGGGPAAAKASFSSRLGSLVRGITALTSKHEEEKLIQQELSSLKATVSAPTTTLKMMKECMVRLIYCEMLGYDASFGYIHAIKLAQQGNLLEKRVGYLAVSLFLHESHELLLLLVNTVVKDLQSTNLVEVCMALTVVSQIFPCEMIPAVLPLIEDKLQHSKEIVRRKAVLALYKFHLIAPNQVQHIHIKFRKALCDRDVGVMAASLHIYLRMIKENSSGYKDLTGSFVTILKQVVGGKLPVEFNYHSVPAPWLQIQLLRILGLLGKDDQRTSELMYDVLDESLRRAELNHNVTYAILFECVHTVYSIYPKSELLEKAAKCIGKFVLSPKINLKYLGLKALTYVIQQDPTLALQHQMTIIECLDHPDPIIKRETLELLYRITNAQNITVIVQKMLEYLHQSKEEYVIVNLVGKIAELAEKYAPDNAWFIQTMNAVFSVGGDVMHPDIPNNFLRLLAEGFDDETEDQQLRLYAVQSYLTLLDMENVFYPQRFLQVMSWVLGEYSYLLDKETPEEVIAKLYKLLMNDSVSSETKAWLIAAVTKLTSQAHSSNTVERLIHEFTISLDTCMRQHAFELKHLHENVELMKSLLPVDRSCEDLVVDASLSFLDGFVAEGLSQGAAPYKPPHQRQEEKLSQEKVLNFEPYGLSFSSSGFTGRQSPAGISLGSDVSGNSAETGLKETNSLKLEGIKKLWGKEGYLPKKESKTGDESGALPVPQESIMENVDQAITKKDQSQVLTQSKEEKEKQLLASSLFVGLGSESTINLLGKADTVSHKFRRKSKVKEAKSGETTSTHNMTCSSFSSLSNVAYEDDYYSNTLHDTGDKELKKFSLTSELLDSESLTELPLVEKFSYCSLSTPSLFANNNMEIFHPPQSTAASVAKESSLASSFLEETTEYIHSNAMEVCNNETISVSSYKIWKDDCLLMVWSVTNKSGLELKSADLEIFPAENFKVTEQPGCCLPVMEAESTKSFQYSVQIEKPFTEGNLTGFISYHMMDTHSAQLEFSVNLSLLDFIRPLKISSDDFGKLWLSFANDVKQNVKMSESQAALPSALKTLQQKLRLHIIEIIGNEGLLACQLLPSIPCLLHCRVHADVLALWFRSSCSTLPDYLLYQCQKVMEGS.

Phosphoserine occurs at positions 700 and 857. The interval 727–1137 (SGALPVPQES…YQCQKVMEGS (411 aa)) is interaction with TEPSIN.

The protein belongs to the adaptor complexes large subunit family. In terms of assembly, adaptor protein complex 4 (AP-4) is a heterotetramer composed of two large adaptins (epsilon-type subunit AP4E1 and beta-type subunit AP4B1), a medium adaptin (mu-type subunit AP4M1) and a small adaptin (sigma-type AP4S1). Interacts with TEPSIN. Interacts with GRIA2; probably indirect it mediates the somatodendritic localization of GRIA2 in neurons. As to expression, widely expressed.

The protein resides in the golgi apparatus. It is found in the trans-Golgi network membrane. Its function is as follows. Component of the adaptor protein complex 4 (AP-4). Adaptor protein complexes are vesicle coat components involved both in vesicle formation and cargo selection. They control the vesicular transport of proteins in different trafficking pathways. AP-4 forms a non clathrin-associated coat on vesicles departing the trans-Golgi network (TGN) and may be involved in the targeting of proteins from the trans-Golgi network (TGN) to the endosomal-lysosomal system. It is also involved in protein sorting to the basolateral membrane in epithelial cells and the proper asymmetric localization of somatodendritic proteins in neurons. AP-4 is involved in the recognition and binding of tyrosine-based sorting signals found in the cytoplasmic part of cargos, but may also recognize other types of sorting signal. The sequence is that of AP-4 complex subunit epsilon-1 from Homo sapiens (Human).